The following is a 223-amino-acid chain: Family of serine hydrolases 2 (223 aa).

Catalysis depends on charge relay system residues S110, D174, and H203.

It belongs to the AB hydrolase 3 family.

Its subcellular location is the cytoplasm. Its function is as follows. Serine hydrolase of unknown specificity. The sequence is that of Family of serine hydrolases 2 (FSH2) from Saccharomyces cerevisiae (strain ATCC 204508 / S288c) (Baker's yeast).